The chain runs to 823 residues: Semaphorin-4B (823 aa).

A signal peptide spans 1–30 (MGRASRSAVLRRALLLLLLLLLLRTTTTRA). Residues 31–703 (LGPRISVPLG…WGADKSYWNE (673 aa)) lie on the Extracellular side of the membrane. Positions 34–510 (RISVPLGSEE…SHSGVVQVPV (477 aa)) constitute a Sema domain. N-linked (GlcNAc...) asparagine glycans are attached at residues Asn-53, Asn-56, and Asn-83. A disulfide bridge connects residues Cys-107 and Cys-118. Asn-129 carries an N-linked (GlcNAc...) asparagine glycan. 3 cysteine pairs are disulfide-bonded: Cys-136-Cys-145, Cys-273-Cys-386, and Cys-297-Cys-346. 2 N-linked (GlcNAc...) asparagine glycosylation sites follow: Asn-397 and Asn-512. Residues 512 to 582 (NCSLYPTCGD…RFLVPGKPCK (71 aa)) form the PSI domain. The cysteines at positions 513 and 530 are disulfide-linked. 3 N-linked (GlcNAc...) asparagine glycosylation sites follow: Asn-567, Asn-615, and Asn-680. The 61-residue stretch at 589–649 (NTVNTLACPL…FQCWSIEEGF (61 aa)) folds into the Ig-like C2-type domain. A disulfide bridge connects residues Cys-596 and Cys-642. A helical transmembrane segment spans residues 704–724 (FLVMCTLFVFAMVLLFLFFLY). The Cytoplasmic portion of the chain corresponds to 725–823 (RHRDGMKLFL…LGSEIRDSVV (99 aa)). Phosphoserine is present on residues Ser-779, Ser-780, Ser-804, and Ser-816.

The protein belongs to the semaphorin family. Interacts with GIPC PDZ domain.

It is found in the membrane. In terms of biological role, inhibits axonal extension by providing local signals to specify territories inaccessible for growing axons. The polypeptide is Semaphorin-4B (Mus musculus (Mouse)).